Reading from the N-terminus, the 393-residue chain is Cobalt-precorrin-5B C(1)-methyltransferase (393 aa).

The disordered stretch occupies residues 1 to 35 (MSDETRVGEAAEQAATPEKIRKGSARRERGNRTGF). Over residues 18–31 (EKIRKGSARRERGN) the composition is skewed to basic and acidic residues.

The protein belongs to the CbiD family.

It catalyses the reaction Co-precorrin-5B + S-adenosyl-L-methionine = Co-precorrin-6A + S-adenosyl-L-homocysteine. It functions in the pathway cofactor biosynthesis; adenosylcobalamin biosynthesis; cob(II)yrinate a,c-diamide from sirohydrochlorin (anaerobic route): step 6/10. Its function is as follows. Catalyzes the methylation of C-1 in cobalt-precorrin-5B to form cobalt-precorrin-6A. This is Cobalt-precorrin-5B C(1)-methyltransferase from Dechloromonas aromatica (strain RCB).